A 706-amino-acid chain; its full sequence is Probable serine/threonine-protein kinase zyg-1 (706 aa).

A Protein kinase domain is found at 13 to 249; sequence YSHLKEIGKG…LTQIVLSEFM (237 aa). ATP is bound by residues 19–27 and lysine 41; that span reads IGKGGFGVV. The active-site Proton acceptor is aspartate 131. Composition is skewed to basic and acidic residues over residues 261 to 290 and 323 to 336; these read SREH…DGRA and FDSE…RDSG. Disordered stretches follow at residues 261–351 and 566–632; these read SREH…NRSQ and SPSS…VAPS. A compositionally biased stretch (low complexity) spans 566–579; sequence SPSSLMPSGSSQTS. Polar residues-rich tracts occupy residues 580 to 592 and 603 to 629; these read RFPF…NQPS and KPTS…SPSV.

Belongs to the protein kinase superfamily. Ser/Thr protein kinase family. Interacts with sel-10. In terms of processing, probably ubiquitinated by the SCF(sel-10) and SCF(lin-23) E3 ubiquitin ligase complexes, leading to its proteasomal degradation.

It is found in the cytoplasm. The protein resides in the cytoskeleton. It localises to the microtubule organizing center. Its subcellular location is the centrosome. The protein localises to the centriole. It catalyses the reaction L-seryl-[protein] + ATP = O-phospho-L-seryl-[protein] + ADP + H(+). The enzyme catalyses L-threonyl-[protein] + ATP = O-phospho-L-threonyl-[protein] + ADP + H(+). Protein kinase that plays a central role in centrosome duplication, control of centrosome size, spindle formation and nuclear envelope breakdown during cell divisions. Paternal copy is required to regulate synthesis of daughter centrioles prior to fertilization. Maternal copy regulates centrosome duplication during later cell cycles. Functions upstream of sas-5 and sas-6, and is required for their localization to the centrosome. Its role in nuclear envelope breakdown is mediated by the spindly-like protein spdl-1 and the RZZ complex, which in turn recruits the spindle checkpoint proteins mdf-1 and mdf-2, dynein and dynactin to unattached kinetochores. This is Probable serine/threonine-protein kinase zyg-1 from Caenorhabditis elegans.